Reading from the N-terminus, the 175-residue chain is uncharacterized protein (175 aa).

A DNL-type zinc finger spans residues 71–166 (QPKPTYNVSF…KPPQFKIRPA (96 aa)). The Zn(2+) site is built by Cys-82, Cys-85, Cys-107, and Cys-110.

This is an uncharacterized protein from Schizosaccharomyces pombe (strain 972 / ATCC 24843) (Fission yeast).